The following is a 764-amino-acid chain: Serine/threonine-protein kinase MPS1 (764 aa).

Disordered stretches follow at residues 66–95, 197–216, and 258–316; these read EEMDRSSSRSHPPPSMGNLTSGHTSTSSHS, ELPLEDSHQTNFKETKRNTD, and QAAL…KSSI. Positions 85-95 are enriched in low complexity; that stretch reads TSGHTSTSSHS. Positions 201-216 are enriched in basic and acidic residues; it reads EDSHQTNFKETKRNTD. Low complexity-rich tracts occupy residues 272–292 and 306–315; these read KSRSSSSSLSSNNLLANKDNS and STGSSSSKSS. Residues 440–720 enclose the Protein kinase domain; that stretch reads YEKIELLGRG…LSSTFLQPFM (281 aa). ATP is bound by residues 446-454 and lysine 468; that span reads LGRGGSSRV. Aspartate 563 functions as the Proton acceptor in the catalytic mechanism.

The protein belongs to the protein kinase superfamily. Ser/Thr protein kinase family. Post-translationally, autophosphorylated.

It carries out the reaction L-seryl-[protein] + ATP = O-phospho-L-seryl-[protein] + ADP + H(+). The enzyme catalyses L-threonyl-[protein] + ATP = O-phospho-L-threonyl-[protein] + ADP + H(+). The catalysed reaction is L-tyrosyl-[protein] + ATP = O-phospho-L-tyrosyl-[protein] + ADP + H(+). Functionally, involved in mitotic spindle assembly checkpoint signaling, a process that delays anaphase until chromosomes are bioriented on the spindle, and in the repair of incorrect mitotic kinetochore-spindle microtubule attachments. Phosphorylates SPC105 on MELT motifs; phosphorylation is required for recruitment of the BUB1-BUB3 complex to kinetochores. Phosphorylates CNN1, which contributes to the enrichment of CNN1 on anaphase kinetochores. Implicated in spindle pole body (SPD) duplication. Phosphorylates the SPC29 and SPC110 spindle pole body components. This Saccharomyces cerevisiae (strain ATCC 204508 / S288c) (Baker's yeast) protein is Serine/threonine-protein kinase MPS1 (MPS1).